We begin with the raw amino-acid sequence, 115 residues long: MARSTSKDAQALIQSLRSAYAATPSNLKIIDLYVVFAVFTALIQVVYMAIVGSFPFNAFLSGLLSCIGTAVLAVCLRIQVNKENKEFKDLAPERAFADFVLCNLVLHLVIMNFLG.

The Cytoplasmic segment spans residues 1-31; the sequence is MARSTSKDAQALIQSLRSAYAATPSNLKIID. Residues 32 to 52 form a helical membrane-spanning segment; that stretch reads LYVVFAVFTALIQVVYMAIVG. The Lumenal segment spans residues 53–55; sequence SFP. A helical transmembrane segment spans residues 56-76; that stretch reads FNAFLSGLLSCIGTAVLAVCL. Residues 77 to 94 are Cytoplasmic-facing; it reads RIQVNKENKEFKDLAPER. The helical transmembrane segment at 95-115 threads the bilayer; sequence AFADFVLCNLVLHLVIMNFLG.

The protein belongs to the DAD/OST2 family. As to quaternary structure, component of the oligosaccharyltransferase (OST) complex.

The protein resides in the endoplasmic reticulum membrane. It functions in the pathway protein modification; protein glycosylation. In terms of biological role, subunit of the oligosaccharyl transferase (OST) complex that catalyzes the initial transfer of a defined glycan (Glc(3)Man(9)GlcNAc(2) in eukaryotes) from the lipid carrier dolichol-pyrophosphate to an asparagine residue within an Asn-X-Ser/Thr consensus motif in nascent polypeptide chains, the first step in protein N-glycosylation. N-glycosylation occurs cotranslationally and the complex associates with the Sec61 complex at the channel-forming translocon complex that mediates protein translocation across the endoplasmic reticulum (ER). All subunits are required for a maximal enzyme activity. In Betula pendula (European white birch), this protein is Dolichyl-diphosphooligosaccharide--protein glycosyltransferase subunit DAD1 (DAD1).